The sequence spans 161 residues: Allophycocyanin alpha chain (161 aa).

N71 bears the N4-methylasparagine mark. A (2R,3E)-phycocyanobilin-binding site is contributed by C81.

It belongs to the phycobiliprotein family. As to quaternary structure, heterodimer of an alpha and a beta chain. Contains one covalently linked phycocyanobilin chromophore.

It localises to the cellular thylakoid membrane. Light-harvesting photosynthetic bile pigment-protein from the phycobiliprotein complex. Allophycocyanin has a maximum absorption at approximately 650 nanometers. The polypeptide is Allophycocyanin alpha chain (apcA) (Synechocystis sp. (strain ATCC 27184 / PCC 6803 / Kazusa)).